A 181-amino-acid polypeptide reads, in one-letter code: Oligoribonuclease (181 aa).

The region spanning 8-171 is the Exonuclease domain; sequence LIWIDLEMTG…QDIQESIAEL (164 aa). Tyr-129 is an active-site residue.

The protein belongs to the oligoribonuclease family.

Its subcellular location is the cytoplasm. Functionally, 3'-to-5' exoribonuclease specific for small oligoribonucleotides. This chain is Oligoribonuclease, found in Shewanella baltica (strain OS155 / ATCC BAA-1091).